A 270-amino-acid chain; its full sequence is Ribitol operon repressor (270 aa).

Residues 1 to 61 (MKKITIYDLA…INRQASMLRS (61 aa)) form the HTH lacI-type domain. A DNA-binding region (H-T-H motif) is located at residues 6-25 (IYDLAELSGVSASAVSAILN).

Functionally, repressor for the genes of the ribitol operon. Binds D-ribulose as an inducer. In Klebsiella aerogenes (Enterobacter aerogenes), this protein is Ribitol operon repressor (rbtR).